A 499-amino-acid polypeptide reads, in one-letter code: U4/U6 small nuclear ribonucleoprotein Prp31 (499 aa).

The interval 1–43 (MSLADELLADLEEAAEEEEGGSYGEEEEEPAIEDVQEETQLDL) is disordered. A compositionally biased stretch (acidic residues) spans 7-40 (LLADLEEAAEEEEGGSYGEEEEEPAIEDVQEETQ). Coiled coils occupy residues 85 to 120 (EAAP…KYSK) and 181 to 215 (DEEL…MSFI). The Nop domain maps to 215–333 (IAPNLSIIIG…IERKFDKWQE (119 aa)). Residues 334–357 (PPPVKQVKPLPAPLDGQRKKRGGR) are disordered. The short motif at 351–364 (RKKRGGRRYRKMKE) is the Nuclear localization signal (NLS) element. Ser379, Ser395, and Ser432 each carry phosphoserine. Lys438 carries the N6-acetyllysine modification. Position 439 is a phosphoserine (Ser439). Position 440 is a phosphothreonine (Thr440). Ser450 bears the Phosphoserine mark. Phosphothreonine is present on Thr455. Glycyl lysine isopeptide (Lys-Gly) (interchain with G-Cter in SUMO2) cross-links involve residues Lys471 and Lys478.

This sequence belongs to the PRP31 family. In terms of assembly, identified in the spliceosome B complex. Component of the U4/U6-U5 tri-snRNP complex composed of the U4, U6 and U5 snRNAs and at least PRPF3, PRPF4, PRPF6, PRPF8, PRPF31, SNRNP200, TXNL4A, SNRNP40, DDX23, CD2BP2, PPIH, SNU13, EFTUD2, SART1 and USP39. Interacts with a complex formed by SNU13 and U4 snRNA, but not with SNU13 or U4 snRNA alone. The complex formed by SNU13 and PRPF31 also binds U4atac snRNA, a characteristic component of specific, less abundant spliceosomal complexes. Interacts with PRPF6/U5 snRNP-associated 102 kDa protein. Component of some MLL1/MLL complex, at least composed of the core components KMT2A/MLL1, ASH2L, HCFC1/HCF1, WDR5 and RBBP5, as well as the facultative components BACC1, CHD8, E2F6, HSP70, INO80C, KANSL1, LAS1L, MAX, MCRS1, MGA, KAT8/MOF, PELP1, PHF20, PRP31, RING2, RUVB1/TIP49A, RUVB2/TIP49B, SENP3, TAF1, TAF4, TAF6, TAF7, TAF9 and TEX10. Interacts (via its NLS) with CTNNBL1. Interacts with USH1G. Post-translationally, phosphorylated by PRP4K during spliceosome assembly.

The protein localises to the nucleus. It localises to the nucleus speckle. It is found in the cajal body. Functionally, involved in pre-mRNA splicing as component of the spliceosome. Required for the assembly of the U4/U5/U6 tri-snRNP complex, one of the building blocks of the spliceosome. The protein is U4/U6 small nuclear ribonucleoprotein Prp31 (Prpf31) of Mus musculus (Mouse).